A 320-amino-acid chain; its full sequence is GDP-L-fucose synthase (320 aa).

Gly14–Gly20 is a binding site for NADP(+). Residue Tyr142 is the Proton donor/acceptor of the active site. Residues Lys146, Pro169–Ile172, and His185 contribute to the NADP(+) site. Residues Lys193, Arg214, and Asp276 each contribute to the substrate site.

The protein belongs to the NAD(P)-dependent epimerase/dehydratase family. Fucose synthase subfamily.

It catalyses the reaction GDP-beta-L-fucose + NADP(+) = GDP-4-dehydro-alpha-D-rhamnose + NADPH + H(+). The protein operates within nucleotide-sugar biosynthesis; GDP-L-fucose biosynthesis via de novo pathway; GDP-L-fucose from GDP-alpha-D-mannose: step 2/2. Functionally, catalyzes the two-step NADP-dependent conversion of GDP-4-dehydro-6-deoxy-D-mannose to GDP-fucose, involving an epimerase and a reductase reaction. In Dictyostelium discoideum (Social amoeba), this protein is GDP-L-fucose synthase (ger).